Consider the following 305-residue polypeptide: Ornithine carbamoyltransferase (305 aa).

Residues 54-57, Q81, R105, and 132-135 contribute to the carbamoyl phosphate site; these read STRT and HPCQ. L-ornithine-binding positions include N163, D220, and 224-225; that span reads SM. Residues 260 to 261 and R288 contribute to the carbamoyl phosphate site; that span reads CL.

It belongs to the aspartate/ornithine carbamoyltransferase superfamily. OTCase family.

The protein localises to the cytoplasm. The catalysed reaction is carbamoyl phosphate + L-ornithine = L-citrulline + phosphate + H(+). The protein operates within amino-acid biosynthesis; L-arginine biosynthesis; L-arginine from L-ornithine and carbamoyl phosphate: step 1/3. Reversibly catalyzes the transfer of the carbamoyl group from carbamoyl phosphate (CP) to the N(epsilon) atom of ornithine (ORN) to produce L-citrulline. This chain is Ornithine carbamoyltransferase, found in Chromohalobacter salexigens (strain ATCC BAA-138 / DSM 3043 / CIP 106854 / NCIMB 13768 / 1H11).